Here is a 134-residue protein sequence, read N- to C-terminus: Fatty acid-binding protein, muscle (134 aa).

(9Z)-octadecenoate-binding positions include R109 and 129 to 131 (RIY).

This sequence belongs to the calycin superfamily. Fatty-acid binding protein (FABP) family. In terms of assembly, monomer. As to expression, adult flight muscle.

Its subcellular location is the cytoplasm. In terms of biological role, binds fatty acids in a 1:1 molar ratio. The sequence is that of Fatty acid-binding protein, muscle from Schistocerca gregaria (Desert locust).